Reading from the N-terminus, the 363-residue chain is tRNA N6-adenosine threonylcarbamoyltransferase (363 aa).

Residues His138, His142, and Tyr159 each coordinate Fe cation. Substrate is bound by residues 159 to 163, Asp191, Asp212, and Ser295; that span reads YVSGG. Residue Asp323 coordinates Fe cation.

Belongs to the KAE1 / TsaD family. Fe(2+) serves as cofactor.

It is found in the cytoplasm. It carries out the reaction L-threonylcarbamoyladenylate + adenosine(37) in tRNA = N(6)-L-threonylcarbamoyladenosine(37) in tRNA + AMP + H(+). In terms of biological role, required for the formation of a threonylcarbamoyl group on adenosine at position 37 (t(6)A37) in tRNAs that read codons beginning with adenine. Is probably involved in the transfer of the threonylcarbamoyl moiety of threonylcarbamoyl-AMP (TC-AMP) to the N6 group of A37. The polypeptide is tRNA N6-adenosine threonylcarbamoyltransferase (Hyperthermus butylicus (strain DSM 5456 / JCM 9403 / PLM1-5)).